Reading from the N-terminus, the 600-residue chain is Aspartate--tRNA(Asp/Asn) ligase (600 aa).

E174 lines the L-aspartate pocket. The tract at residues 198-201 (QLFK) is aspartate. R220 provides a ligand contact to L-aspartate. ATP contacts are provided by residues 220–222 (RDE) and Q229. H457 contributes to the L-aspartate binding site. E491 lines the ATP pocket. Residue R498 coordinates L-aspartate. 543-546 (GLDR) is a binding site for ATP.

Belongs to the class-II aminoacyl-tRNA synthetase family. Type 1 subfamily. In terms of assembly, homodimer.

The protein resides in the cytoplasm. The enzyme catalyses tRNA(Asx) + L-aspartate + ATP = L-aspartyl-tRNA(Asx) + AMP + diphosphate. Its function is as follows. Aspartyl-tRNA synthetase with relaxed tRNA specificity since it is able to aspartylate not only its cognate tRNA(Asp) but also tRNA(Asn). Reaction proceeds in two steps: L-aspartate is first activated by ATP to form Asp-AMP and then transferred to the acceptor end of tRNA(Asp/Asn). The chain is Aspartate--tRNA(Asp/Asn) ligase from Burkholderia cenocepacia (strain ATCC BAA-245 / DSM 16553 / LMG 16656 / NCTC 13227 / J2315 / CF5610) (Burkholderia cepacia (strain J2315)).